Reading from the N-terminus, the 104-residue chain is L-rhamnose mutarotase (104 aa).

Y18 contributes to the substrate binding site. The active-site Proton donor is H22. Residues Y41 and 76 to 77 (WW) each bind substrate.

The protein belongs to the rhamnose mutarotase family. As to quaternary structure, homodimer.

It localises to the cytoplasm. The catalysed reaction is alpha-L-rhamnose = beta-L-rhamnose. Its pathway is carbohydrate metabolism; L-rhamnose metabolism. In terms of biological role, involved in the anomeric conversion of L-rhamnose. The sequence is that of L-rhamnose mutarotase from Tolumonas auensis (strain DSM 9187 / NBRC 110442 / TA 4).